We begin with the raw amino-acid sequence, 550 residues long: Arginine--tRNA ligase (550 aa).

Positions 130–140 (ANPTGPIHLGG) match the 'HIGH' region motif.

This sequence belongs to the class-I aminoacyl-tRNA synthetase family. As to quaternary structure, monomer.

The protein localises to the cytoplasm. The catalysed reaction is tRNA(Arg) + L-arginine + ATP = L-arginyl-tRNA(Arg) + AMP + diphosphate. In Corynebacterium diphtheriae (strain ATCC 700971 / NCTC 13129 / Biotype gravis), this protein is Arginine--tRNA ligase.